Reading from the N-terminus, the 142-residue chain is Transcription antitermination protein NusB (142 aa).

The protein belongs to the NusB family.

Functionally, involved in transcription antitermination. Required for transcription of ribosomal RNA (rRNA) genes. Binds specifically to the boxA antiterminator sequence of the ribosomal RNA (rrn) operons. This chain is Transcription antitermination protein NusB, found in Roseiflexus castenholzii (strain DSM 13941 / HLO8).